Here is a 601-residue protein sequence, read N- to C-terminus: Elongation factor 4 (601 aa).

The region spanning 6–188 is the tr-type G domain; sequence SHIRNFSIIA…QIVHRVPPPE (183 aa). GTP contacts are provided by residues 18-23 and 135-138; these read DHGKST and NKID.

Belongs to the TRAFAC class translation factor GTPase superfamily. Classic translation factor GTPase family. LepA subfamily.

It localises to the cell inner membrane. It catalyses the reaction GTP + H2O = GDP + phosphate + H(+). Required for accurate and efficient protein synthesis under certain stress conditions. May act as a fidelity factor of the translation reaction, by catalyzing a one-codon backward translocation of tRNAs on improperly translocated ribosomes. Back-translocation proceeds from a post-translocation (POST) complex to a pre-translocation (PRE) complex, thus giving elongation factor G a second chance to translocate the tRNAs correctly. Binds to ribosomes in a GTP-dependent manner. The polypeptide is Elongation factor 4 (Anaeromyxobacter dehalogenans (strain 2CP-C)).